The sequence spans 260 residues: Snake venom serine protease pallabin-2 (260 aa).

The first 18 residues, 1–18 (MVLIKVLANLLILQLSYA), serve as a signal peptide directing secretion. Residues 19 to 24 (QKSSEL) constitute a propeptide that is removed on maturation. The Peptidase S1 domain occupies 25-251 (IIGGDECNIN…HLDWIENIIA (227 aa)). Intrachain disulfides connect C31-C163, C50-C66, C98-C258, C142-C212, C174-C191, and C202-C227. The active-site Charge relay system is H65. N103 is a glycosylation site (N-linked (GlcNAc...) asparagine). Residue D110 is the Charge relay system of the active site. S206 (charge relay system) is an active-site residue.

This sequence belongs to the peptidase S1 family. Snake venom subfamily. Monomer. Expressed by the venom gland.

It localises to the secreted. Its function is as follows. Snake venom serine protease that may act in the hemostasis system of the prey. This Gloydius halys (Chinese water mocassin) protein is Snake venom serine protease pallabin-2 (JZTHR7).